Reading from the N-terminus, the 374-residue chain is Phosphate-binding protein PstS 1 (374 aa).

Positions 1-23 (MKIRLHTLLAVLTAAPLLLAAAG) are cleaved as a signal peptide. Cys24 carries the N-palmitoyl cysteine lipid modification. The S-diacylglycerol cysteine moiety is linked to residue Cys24. The interval 25 to 48 (GSKPPSGSPETGAGAGTVATTPAS) is disordered. Phosphate is bound by residues 58 to 60 (STL), Ser88, Asp106, and 189 to 191 (SGD).

It belongs to the PstS family. As to quaternary structure, the complex is composed of two ATP-binding proteins (PstB), two transmembrane proteins (PstC and PstA) and a solute-binding protein (PstS).

It is found in the cell membrane. Part of the ABC transporter complex PstSACB involved in phosphate import. The polypeptide is Phosphate-binding protein PstS 1 (pstS1) (Mycobacterium tuberculosis (strain CDC 1551 / Oshkosh)).